The primary structure comprises 164 residues: B-phycoerythrin alpha chain (164 aa).

(2R,3E)-phycoerythrobilin is bound by residues cysteine 82 and cysteine 139.

It belongs to the phycobiliprotein family. As to quaternary structure, heteromer of 6 alpha, 6 beta and one gamma chain. Post-translationally, contains two covalently linked bilin chromophores.

The protein resides in the plastid. The protein localises to the chloroplast thylakoid membrane. Functionally, light-harvesting photosynthetic bile pigment-protein from the phycobiliprotein complex. The polypeptide is B-phycoerythrin alpha chain (cpeA) (Porphyridium sordidum (Red alga)).